A 597-amino-acid chain; its full sequence is Bromodomain-containing protein 9 (597 aa).

The span at 1–10 shows a compositional bias: basic residues; the sequence is MGKKHKKHKA. Disordered stretches follow at residues 1–25 and 38–138; these read MGKK…KPLE and EVTE…ENES. 2 stretches are compositionally biased toward basic and acidic residues: residues 11–25 and 50–62; these read EWRS…KPLE and SYYD…ERER. The residue at position 56 (Ser56) is a Phosphoserine. The span at 63–73 shows a compositional bias: basic residues; that stretch reads HKEKKKKKKKK. The segment covering 74 to 85 has biased composition (basic and acidic residues); the sequence is SEKEKHLDDEER. Basic residues predominate over residues 86–97; sequence RKRKEEKKRKRE. Basic and acidic residues predominate over residues 111 to 126; the sequence is DPGKKVEVEPPPDRPV. The 105-residue stretch at 136 to 240 folds into the Bromo domain; it reads NESTPIQQLL…HAGFKMMSKQ (105 aa). The tract at residues 214 to 216 is histone H4K5ac H4K8ac and histone H4K5bu H4K8bu binding; the sequence is TYN. At Lys373 the chain carries N6-acetyllysine; alternate. Lys373 is covalently cross-linked (Glycyl lysine isopeptide (Lys-Gly) (interchain with G-Cter in SUMO2); alternate). The segment at 536 to 597 is disordered; the sequence is EAQAERGGSR…SPEPAASAKT (62 aa). Positions 544-556 are enriched in low complexity; the sequence is SRPSSNLSSLSNA. Phosphoserine occurs at positions 566 and 588.

In terms of assembly, binds acetylated histones H3 and H4. Binds butyrylated histone H4. Component of the multiprotein chromatin-remodeling subcomplex SWI/SNF called GBAF, which includes at least BICRA or BICRAL (mutually exclusive), BRD9, SS18, the core BAF subunits, SMARCA2/BRM, SMARCA4/BRG1/BAF190A, ACTL6A/BAF53, SMARCC1/BAF155, and SMARCD1/BAF60A. Interacts (via N-terminal bromodomain) with acetylated RAD54. Interacts (via C-terminus) with RAD51.

It localises to the nucleus. In terms of biological role, plays a role in chromatin remodeling and regulation of transcription. Acts as a chromatin reader that recognizes and binds acylated histones: binds histones that are acetylated and/or butyrylated. Component of SWI/SNF chromatin remodeling subcomplex GBAF that carries out key enzymatic activities, changing chromatin structure by altering DNA-histone contacts within a nucleosome in an ATP-dependent manner. Also orchestrates the RAD51-RAD54 complex formation and thereby plays a role in homologous recombination (HR). The polypeptide is Bromodomain-containing protein 9 (BRD9) (Homo sapiens (Human)).